The primary structure comprises 302 residues: Protein FdhE homolog (302 aa).

The protein belongs to the FdhE family.

The protein resides in the cytoplasm. Its function is as follows. Necessary for formate dehydrogenase activity. The protein is Protein FdhE homolog of Shewanella sp. (strain MR-4).